The primary structure comprises 173 residues: Crossover junction endodeoxyribonuclease RuvC (173 aa).

Catalysis depends on residues aspartate 8, glutamate 67, and aspartate 139. The Mg(2+) site is built by aspartate 8, glutamate 67, and aspartate 139.

It belongs to the RuvC family. As to quaternary structure, homodimer which binds Holliday junction (HJ) DNA. The HJ becomes 2-fold symmetrical on binding to RuvC with unstacked arms; it has a different conformation from HJ DNA in complex with RuvA. In the full resolvosome a probable DNA-RuvA(4)-RuvB(12)-RuvC(2) complex forms which resolves the HJ. It depends on Mg(2+) as a cofactor.

The protein localises to the cytoplasm. The enzyme catalyses Endonucleolytic cleavage at a junction such as a reciprocal single-stranded crossover between two homologous DNA duplexes (Holliday junction).. Its function is as follows. The RuvA-RuvB-RuvC complex processes Holliday junction (HJ) DNA during genetic recombination and DNA repair. Endonuclease that resolves HJ intermediates. Cleaves cruciform DNA by making single-stranded nicks across the HJ at symmetrical positions within the homologous arms, yielding a 5'-phosphate and a 3'-hydroxyl group; requires a central core of homology in the junction. The consensus cleavage sequence is 5'-(A/T)TT(C/G)-3'. Cleavage occurs on the 3'-side of the TT dinucleotide at the point of strand exchange. HJ branch migration catalyzed by RuvA-RuvB allows RuvC to scan DNA until it finds its consensus sequence, where it cleaves and resolves the cruciform DNA. The sequence is that of Crossover junction endodeoxyribonuclease RuvC from Edwardsiella ictaluri (strain 93-146).